The chain runs to 53 residues: Large ribosomal subunit protein bL33 (53 aa).

Belongs to the bacterial ribosomal protein bL33 family.

The polypeptide is Large ribosomal subunit protein bL33 (Blochmanniella floridana).